A 648-amino-acid chain; its full sequence is Acetyl-coenzyme A synthetase (648 aa).

CoA-binding positions include 190 to 193 (RGGK), T308, and N332. Residues 384–386 (GEP), 408–413 (DTWWQT), D497, and R512 contribute to the ATP site. S520 serves as a coordination point for CoA. Residue R523 participates in ATP binding. 3 residues coordinate Mg(2+): V534, H536, and V539. R581 provides a ligand contact to CoA. K606 carries the post-translational modification N6-acetyllysine.

Belongs to the ATP-dependent AMP-binding enzyme family. It depends on Mg(2+) as a cofactor. In terms of processing, acetylated. Deacetylation by the SIR2-homolog deacetylase activates the enzyme.

It catalyses the reaction acetate + ATP + CoA = acetyl-CoA + AMP + diphosphate. Functionally, catalyzes the conversion of acetate into acetyl-CoA (AcCoA), an essential intermediate at the junction of anabolic and catabolic pathways. AcsA undergoes a two-step reaction. In the first half reaction, AcsA combines acetate with ATP to form acetyl-adenylate (AcAMP) intermediate. In the second half reaction, it can then transfer the acetyl group from AcAMP to the sulfhydryl group of CoA, forming the product AcCoA. The protein is Acetyl-coenzyme A synthetase of Bradyrhizobium diazoefficiens (strain JCM 10833 / BCRC 13528 / IAM 13628 / NBRC 14792 / USDA 110).